We begin with the raw amino-acid sequence, 131 residues long: Glycine cleavage system H protein (131 aa).

The region spanning 24–106 (RAIVGISDHA…YGEGWIMVIE (83 aa)) is the Lipoyl-binding domain. An N6-lipoyllysine modification is found at lysine 65.

This sequence belongs to the GcvH family. As to quaternary structure, the glycine cleavage system is composed of four proteins: P, T, L and H. The cofactor is (R)-lipoate.

Functionally, the glycine cleavage system catalyzes the degradation of glycine. The H protein shuttles the methylamine group of glycine from the P protein to the T protein. This is Glycine cleavage system H protein from Xylella fastidiosa (strain M12).